Here is a 264-residue protein sequence, read N- to C-terminus: Astacin-like metalloprotease toxin 1 (264 aa).

A signal peptide spans 1–16 (MIKYIGVFAFLVGGFC). A propeptide spanning residues 17-51 (HDFETVISNQDPIVDGMRLVEGDMLFDDGPLFTER) is cleaved from the precursor. Positions 52 to 249 (NAVKYDQQLW…VKVNKLYKCP (198 aa)) constitute a Peptidase M12A domain. Disulfide bonds link C93–C248 and C114–C135. H143 serves as a coordination point for Zn(2+). E144 is a catalytic residue. Residues H147 and H153 each coordinate Zn(2+). 2 N-linked (GlcNAc...) asparagine glycosylation sites follow: N173 and N185.

Monomer. It depends on Zn(2+) as a cofactor. Expressed by the venom gland.

The protein localises to the secreted. Its activity is regulated as follows. Inhibited by 1,10-phenanthroline. Functionally, zinc metalloprotease. Provoques deadhesion of endothelial cells from cell cultures, and also degradation of fibronectin, fibrinogen and gelatin in vitro. Its role in the venom is not fully understood but it might act as a spreading factor that facilitates diffusion of other venom toxins. Alternatively, it might be involved in the proteolytic processing of other venom toxins or it might play a role in extra-oral digestion of prey. This is Astacin-like metalloprotease toxin 1 from Loxosceles intermedia (Brown spider).